Here is a 1137-residue protein sequence, read N- to C-terminus: Ribonucleoside-diphosphate reductase large subunit (1137 aa).

Positions methionine 1–glutamate 32 are disordered. Positions serine 64–aspartate 84 match the RIP homotypic interaction motif (RHIM) motif. Disordered regions lie at residues glycine 124–glycine 159 and alanine 173–proline 315. The segment covering alanine 131–aspartate 141 has biased composition (polar residues). Acidic residues predominate over residues serine 196 to serine 206. Over residues alanine 281–alanine 290 the composition is skewed to low complexity. The segment covering valine 291–proline 304 has biased composition (basic and acidic residues). Substrate is bound by residues threonine 566, serine 581–cysteine 582, glycine 612, asparagine 791–glutamate 795, and proline 968–serine 972. An intrachain disulfide couples cysteine 582 to cysteine 808. The active-site Proton acceptor is asparagine 791. The Cysteine radical intermediate role is filled by cysteine 793. Glutamate 795 serves as the catalytic Proton acceptor.

The protein belongs to the ribonucleoside diphosphate reductase large chain family. As to quaternary structure, heterotetramer composed of a homodimer of the large subunit (R1) and a homodimer of the small subunit (R2). Larger multisubunit protein complex are also active, composed of (R1)n(R2)n. Self-assembles (via RIP homotypic interaction motif/RHIM) into homomeric fibrillar amyloid structures. Interacts (via RHIM) with human RIPK1 (via RHIM). Interacts (via RHIM) with human RIPK3 (via RHIM); the interaction leads to heteromeric amyloid assemblies. Interacts (via RHIM) with human ZBP1 (via RHIM); the interaction leads to heteromeric amyloid assemblies. Interacts (via C-terminus) with host CASP8.

It catalyses the reaction a 2'-deoxyribonucleoside 5'-diphosphate + [thioredoxin]-disulfide + H2O = a ribonucleoside 5'-diphosphate + [thioredoxin]-dithiol. In terms of biological role, ribonucleoside-diphosphate reductase holoenzyme that provides the precursors necessary for viral DNA synthesis. Allows virus growth in non-dividing cells, as well as reactivation from latency in infected hosts. Catalyzes the biosynthesis of deoxyribonucleotides from the corresponding ribonucleotides. Prevents host necroptosis by targeting host RIPK1 and RIPK3, thereby hampering the formation of necroptotic RIPK1-RIPK3 complexes. Forms hetero-amyloid structures with host proteins RIPK3 or ZBP1 which may prevent RIPK3- and ZBP1-mediated necroptosis. In addition, inhibits extrinsic apoptosis by targeting host CASP8. In Human herpesvirus 1 (strain 17) (HHV-1), this protein is Ribonucleoside-diphosphate reductase large subunit.